A 369-amino-acid chain; its full sequence is Naringenin,2-oxoglutarate 3-dioxygenase (369 aa).

Residues 193–297 form the Fe2OG dioxygenase domain; sequence CVDMDQKVVV…RLSIATFQNP (105 aa). Fe cation is bound by residues histidine 220, aspartate 222, and histidine 278. Arginine 288 is a binding site for 2-oxoglutarate.

Belongs to the iron/ascorbate-dependent oxidoreductase family. Fe(2+) is required as a cofactor. Requires L-ascorbate as cofactor.

It catalyses the reaction a (2S)-flavan-4-one + 2-oxoglutarate + O2 = a (2R,3R)-dihydroflavonol + succinate + CO2. Its pathway is secondary metabolite biosynthesis; flavonoid biosynthesis. Its function is as follows. Catalyzes the 3-beta-hydroxylation of 2S-flavanones to 2R,3R-dihydroflavonols which are intermediates in the biosynthesis of flavonols, anthocyanidins, catechins and proanthocyanidins in plants. This Petunia hybrida (Petunia) protein is Naringenin,2-oxoglutarate 3-dioxygenase (AN3).